The primary structure comprises 291 residues: Nucleotide-binding protein lwe2422 (291 aa).

Position 13–20 (13–20 (GMSGAGKT)) interacts with ATP. Residue 63-66 (DLRG) participates in GTP binding.

This sequence belongs to the RapZ-like family.

Its function is as follows. Displays ATPase and GTPase activities. In Listeria welshimeri serovar 6b (strain ATCC 35897 / DSM 20650 / CCUG 15529 / CIP 8149 / NCTC 11857 / SLCC 5334 / V8), this protein is Nucleotide-binding protein lwe2422.